Here is a 106-residue protein sequence, read N- to C-terminus: Putative double-stranded DNA mimic protein VP1949 (106 aa).

The protein belongs to the putative dsDNA mimic protein family.

Functionally, may act as a double-stranded DNA (dsDNA) mimic. Probably regulates the activity of a dsDNA-binding protein. The chain is Putative double-stranded DNA mimic protein VP1949 from Vibrio parahaemolyticus serotype O3:K6 (strain RIMD 2210633).